The primary structure comprises 355 residues: F-box only protein 32 (355 aa).

The short motif at 62–67 is the Nuclear localization signal element; the sequence is KKRKKD. Residues 169 to 173 carry the Nuclear export signal motif; it reads LLQTL. An F-box domain is found at 223 to 271; the sequence is LTITDLPVCLQLNIMQRLSDGRDLVSLGQAAPDLHVLSEDRLLWKRLCQ. The Bipartite nuclear localization signal motif lies at 280–295; sequence RKRLILSDKGQLDWKK.

As to quaternary structure, part of the SCF (SKP1-CUL1-F-box) E3 ubiquitin-protein ligase complex SCF(FBXO32) formed of CUL1, SKP1, RBX1 and FBXO32. In terms of tissue distribution, specifically expressed in cardiac and skeletal muscle.

The protein localises to the cytoplasm. It is found in the nucleus. The protein operates within protein modification; protein ubiquitination. In terms of biological role, substrate recognition component of a SCF (SKP1-CUL1-F-box protein) E3 ubiquitin-protein ligase complex which mediates the ubiquitination and subsequent proteasomal degradation of target proteins. Probably recognizes and binds to phosphorylated target proteins during skeletal muscle atrophy. Recognizes TERF1. The polypeptide is F-box only protein 32 (Fbxo32) (Mus musculus (Mouse)).